The chain runs to 129 residues: NADPH-dependent 7-cyano-7-deazaguanine reductase (129 aa).

C34 (thioimide intermediate) is an active-site residue. Catalysis depends on D41, which acts as the Proton donor. Substrate contacts are provided by residues 56–58 (VEL) and 75–76 (HE).

Belongs to the GTP cyclohydrolase I family. QueF type 1 subfamily.

Its subcellular location is the cytoplasm. The enzyme catalyses 7-aminomethyl-7-carbaguanine + 2 NADP(+) = 7-cyano-7-deazaguanine + 2 NADPH + 3 H(+). Its pathway is tRNA modification; tRNA-queuosine biosynthesis. Functionally, catalyzes the NADPH-dependent reduction of 7-cyano-7-deazaguanine (preQ0) to 7-aminomethyl-7-deazaguanine (preQ1). The sequence is that of NADPH-dependent 7-cyano-7-deazaguanine reductase from Alkalilimnicola ehrlichii (strain ATCC BAA-1101 / DSM 17681 / MLHE-1).